Reading from the N-terminus, the 317-residue chain is tRNA dimethylallyltransferase (317 aa).

14 to 21 contributes to the ATP binding site; that stretch reads GPTASGKT. Substrate is bound at residue 16-21; sequence TASGKT. 2 interaction with substrate tRNA regions span residues 39 to 42 and 163 to 167; these read DSAL and QRIQR.

Belongs to the IPP transferase family. As to quaternary structure, monomer. It depends on Mg(2+) as a cofactor.

It catalyses the reaction adenosine(37) in tRNA + dimethylallyl diphosphate = N(6)-dimethylallyladenosine(37) in tRNA + diphosphate. Its function is as follows. Catalyzes the transfer of a dimethylallyl group onto the adenine at position 37 in tRNAs that read codons beginning with uridine, leading to the formation of N6-(dimethylallyl)adenosine (i(6)A). The sequence is that of tRNA dimethylallyltransferase from Stenotrophomonas maltophilia (strain R551-3).